A 205-amino-acid chain; its full sequence is Small ribosomal subunit protein uS4 (205 aa).

Residues 26-46 (PVNRREYGPGQHGQRRKQKPS) are disordered. Positions 94–157 (RRLDAVVYRL…KQLAIVLDAV (64 aa)) constitute an S4 RNA-binding domain.

It belongs to the universal ribosomal protein uS4 family. In terms of assembly, part of the 30S ribosomal subunit. Contacts protein S5. The interaction surface between S4 and S5 is involved in control of translational fidelity.

Functionally, one of the primary rRNA binding proteins, it binds directly to 16S rRNA where it nucleates assembly of the body of the 30S subunit. With S5 and S12 plays an important role in translational accuracy. The polypeptide is Small ribosomal subunit protein uS4 (Gluconobacter oxydans (strain 621H) (Gluconobacter suboxydans)).